A 1786-amino-acid chain; its full sequence is uncharacterized protein (1786 aa).

Disordered stretches follow at residues 140 to 191, 203 to 329, and 400 to 480; these read QGLR…LPEA, RRES…RGGV, and GGSD…TPPE. Polar residues predominate over residues 149 to 158; that stretch reads SDMNSQTSLT. Residues 232-247 show a composition bias toward low complexity; sequence GHAPEAPAPGESPASS. The segment covering 248–259 has biased composition (polar residues); that stretch reads QCLPSQACENDF. Positions 306–329 are enriched in basic and acidic residues; the sequence is TSCRQHREEAGDRAGAGEDKRGGV. A compositionally biased stretch (low complexity) spans 422–438; sequence STTPSTNTTRTPSPISS. Positions 467–480 are enriched in pro residues; it reads VPPPTGPGTATPPE. At T721 the chain carries Phosphothreonine. Disordered regions lie at residues 746–907, 1081–1180, 1218–1242, 1291–1348, 1362–1460, and 1477–1550; these read SESK…SDGH, VRDV…NSSP, ASAQRTPEKPKEEEAKEEGKAPKPA, KEGV…VSAR, SLYI…NSDC, and LLGR…EHTP. Composition is skewed to basic and acidic residues over residues 810–828 and 845–861; these read MQREHEFKMERGEVTDTSH and KPWERGLQRQSSRHSEA. Over residues 1105 to 1115 the composition is skewed to low complexity; that stretch reads KGSGDSSDKGS. Positions 1131–1140 are enriched in polar residues; the sequence is TPASGGSRSL. The segment covering 1153–1164 has biased composition (basic and acidic residues); sequence PREEGVDREPRE. Over residues 1167–1180 the composition is skewed to polar residues; that stretch reads SQVSNGGRLLNSSP. A Phosphoserine modification is found at S1179. Basic and acidic residues-rich tracts occupy residues 1223–1238 and 1301–1319; these read TPEKPKEEEAKEEGKA and DPDKLAKQLGQVEERDTGH. Composition is skewed to polar residues over residues 1336 to 1345, 1389 to 1401, and 1504 to 1521; these read RNSNPSTESV, NVFTVSSSSTQKT, and ARSQVPSNPKGSQVSGTS. R1767 carries the post-translational modification Omega-N-methylarginine.

This is an uncharacterized protein from Mus musculus (Mouse).